Reading from the N-terminus, the 132-residue chain is Homeobox protein ceh-1 (132 aa).

Residues 1–60 (MRRARTAFTYEQLVALENKFKTSRYLSVVERLNLAIQLQLSETQVKIWFQNRRTKWKKHN) constitute a DNA-binding region (homeobox). Residues 56 to 80 (WKKHNPGQDANTPQTPPSSDETQIQ) form a disordered region. Residues 63–80 (QDANTPQTPPSSDETQIQ) are compositionally biased toward polar residues.

Its subcellular location is the nucleus. In Caenorhabditis elegans, this protein is Homeobox protein ceh-1 (ceh-1).